The sequence spans 20 residues: FFPIIAGMAAKVICAITKKC.

The cysteines at positions 14 and 20 are disulfide-linked.

As to expression, expressed by the skin glands.

The protein resides in the secreted. Antimicrobial peptide with activity against Gram-negative and Gram-positive bacteria (MIC=13 uM against E.coli, MIC=3 uM against S.aureus) and fungi (MIC=3 uM against C.albicans). Shows hemolytic activity on human erythrocytes (HC(50)=8 uM). In Lithobates septentrionalis (Mink frog), this protein is Brevinin-1SPd.